We begin with the raw amino-acid sequence, 336 residues long: tRNA N6-adenosine threonylcarbamoyltransferase (336 aa).

His111 and His115 together coordinate Fe cation. Substrate contacts are provided by residues 134 to 138 (LVSGG), Asp167, Gly180, and Asn271. Asp299 contributes to the Fe cation binding site.

The protein belongs to the KAE1 / TsaD family. It depends on Fe(2+) as a cofactor.

It is found in the cytoplasm. It carries out the reaction L-threonylcarbamoyladenylate + adenosine(37) in tRNA = N(6)-L-threonylcarbamoyladenosine(37) in tRNA + AMP + H(+). Functionally, required for the formation of a threonylcarbamoyl group on adenosine at position 37 (t(6)A37) in tRNAs that read codons beginning with adenine. Is involved in the transfer of the threonylcarbamoyl moiety of threonylcarbamoyl-AMP (TC-AMP) to the N6 group of A37, together with TsaE and TsaB. TsaD likely plays a direct catalytic role in this reaction. The protein is tRNA N6-adenosine threonylcarbamoyltransferase of Thioalkalivibrio sulfidiphilus (strain HL-EbGR7).